The primary structure comprises 238 residues: Ribonuclease PH (238 aa).

Phosphate-binding positions include Arg86 and 124–126; that span reads GTR.

Belongs to the RNase PH family. Homohexameric ring arranged as a trimer of dimers.

The catalysed reaction is tRNA(n+1) + phosphate = tRNA(n) + a ribonucleoside 5'-diphosphate. Its function is as follows. Phosphorolytic 3'-5' exoribonuclease that plays an important role in tRNA 3'-end maturation. Removes nucleotide residues following the 3'-CCA terminus of tRNAs; can also add nucleotides to the ends of RNA molecules by using nucleoside diphosphates as substrates, but this may not be physiologically important. Probably plays a role in initiation of 16S rRNA degradation (leading to ribosome degradation) during starvation. The polypeptide is Ribonuclease PH (Marinobacter nauticus (strain ATCC 700491 / DSM 11845 / VT8) (Marinobacter aquaeolei)).